We begin with the raw amino-acid sequence, 214 residues long: Protein-L-isoaspartate O-methyltransferase (214 aa).

Residue Ser63 is part of the active site.

It belongs to the methyltransferase superfamily. L-isoaspartyl/D-aspartyl protein methyltransferase family.

Its subcellular location is the cytoplasm. The catalysed reaction is [protein]-L-isoaspartate + S-adenosyl-L-methionine = [protein]-L-isoaspartate alpha-methyl ester + S-adenosyl-L-homocysteine. Its function is as follows. Catalyzes the methyl esterification of L-isoaspartyl residues in peptides and proteins that result from spontaneous decomposition of normal L-aspartyl and L-asparaginyl residues. It plays a role in the repair and/or degradation of damaged proteins. This chain is Protein-L-isoaspartate O-methyltransferase, found in Maridesulfovibrio salexigens (strain ATCC 14822 / DSM 2638 / NCIMB 8403 / VKM B-1763) (Desulfovibrio salexigens).